The chain runs to 954 residues: Serine/threonine-protein kinase ste20 (954 aa).

The span at 1-17 (MDGQLSLLSPTSSSSTS) shows a compositional bias: low complexity. Disordered regions lie at residues 1 to 165 (MDGQ…YDPL) and 203 to 316 (AAPA…RKKS). A compositionally biased stretch (basic residues) spans 18 to 28 (HSRKRLTKKQR). Composition is skewed to polar residues over residues 33-42 (NHRTSSSFNV), 57-75 (SASS…SLAR), and 100-121 (RSHT…TIPT). 3 stretches are compositionally biased toward low complexity: residues 127-136 (SPASSSQPQT), 143-153 (SAVASTTVTSS), and 203-214 (AAPAPTSTTTIA). Over residues 224 to 234 (VAPPPPPPPPA) the composition is skewed to pro residues. Composition is skewed to low complexity over residues 245-256 (ARSSKPSKSPKS) and 265-277 (ASSF…FSSA). The CRIB domain occupies 334–347 (ISAPENPVHVTHVG). 2 disordered regions span residues 440-562 (PMIS…VQAS) and 587-655 (QAMA…SNAI). Pro residues-rich tracts occupy residues 463-475 (RAPP…PGPL) and 514-527 (MPPP…PYLP). The region spanning 674 to 925 (YRGFTKIGQG…AHDLLRHDFM (252 aa)) is the Protein kinase domain. ATP-binding positions include 680–688 (IGQGASGGV) and K703. The active-site Proton acceptor is the D793.

The protein belongs to the protein kinase superfamily. STE Ser/Thr protein kinase family. STE20 subfamily.

The protein resides in the cytoplasm. It localises to the nucleus. The enzyme catalyses L-seryl-[protein] + ATP = O-phospho-L-seryl-[protein] + ADP + H(+). It carries out the reaction L-threonyl-[protein] + ATP = O-phospho-L-threonyl-[protein] + ADP + H(+). MAP4K component of the MAPK pathway required for the mating pheromone response and the regulation of cell polarity and cell cycle. Phosphorylates histone H2B to form H2BS10ph. This chain is Serine/threonine-protein kinase ste20 (stk-4), found in Neurospora crassa (strain ATCC 24698 / 74-OR23-1A / CBS 708.71 / DSM 1257 / FGSC 987).